The sequence spans 332 residues: Inositol 2-dehydrogenase 2 (332 aa).

The protein belongs to the Gfo/Idh/MocA family. Homotetramer.

It catalyses the reaction myo-inositol + NAD(+) = scyllo-inosose + NADH + H(+). Functionally, involved in the oxidation of myo-inositol (MI) to 2-keto-myo-inositol (2KMI or 2-inosose). This chain is Inositol 2-dehydrogenase 2, found in Paenarthrobacter aurescens (strain TC1).